The chain runs to 380 residues: MFRLLTAGESHGKSLVGVIEGFPANVKIDIEEINRDLGRRQRGYGRGGRMKIEKDRVEILSGVRGGKTLGSPISFLIENKDYANWEPYMNPEAVDGEEKRVTQPRPGHGDLTGTLKYGFDDIRNVLERSSARETAVRVAIGSLAKQLMREFHIEVYSHVTAIGSVSLGEPVENIEKIKRAEDSEVRCLDPEVEKAMIEEIKRAKEEGDSLGGIFEIHVTGVPRGLGSYVQWDHKLDAKLAHALMSIQAIKGVEVGCGFDQAQKKGSQVHDEIFFSQEKDYYRKTNYAGGIEGGMSNGENIHLRCAMKPIPTLYKPLRTVDIETKEAVLATVERSDSCAVPAASIVGEMVAITVIAQEFLKKFGSDSLEEIRKTWKSYTSI.

Arg40 and Arg46 together coordinate NADP(+). Residues 128–130, 247–248, Gly292, 307–311, and Arg333 contribute to the FMN site; these read RSS, QA, and KPIPT.

This sequence belongs to the chorismate synthase family. In terms of assembly, homotetramer. Requires FMNH2 as cofactor.

The catalysed reaction is 5-O-(1-carboxyvinyl)-3-phosphoshikimate = chorismate + phosphate. It participates in metabolic intermediate biosynthesis; chorismate biosynthesis; chorismate from D-erythrose 4-phosphate and phosphoenolpyruvate: step 7/7. In terms of biological role, catalyzes the anti-1,4-elimination of the C-3 phosphate and the C-6 proR hydrogen from 5-enolpyruvylshikimate-3-phosphate (EPSP) to yield chorismate, which is the branch point compound that serves as the starting substrate for the three terminal pathways of aromatic amino acid biosynthesis. This reaction introduces a second double bond into the aromatic ring system. The protein is Chorismate synthase of Alkaliphilus metalliredigens (strain QYMF).